The following is a 249-amino-acid chain: Triosephosphate isomerase (249 aa).

Asparagine 8 to lysine 10 is a substrate binding site. Histidine 95 acts as the Electrophile in catalysis. Glutamate 163 acts as the Proton acceptor in catalysis. Substrate contacts are provided by glycine 169 and serine 209.

This sequence belongs to the triosephosphate isomerase family. Homodimer.

The protein resides in the cytoplasm. It carries out the reaction D-glyceraldehyde 3-phosphate = dihydroxyacetone phosphate. Its pathway is carbohydrate biosynthesis; gluconeogenesis. It participates in carbohydrate degradation; glycolysis; D-glyceraldehyde 3-phosphate from glycerone phosphate: step 1/1. Involved in the gluconeogenesis. Catalyzes stereospecifically the conversion of dihydroxyacetone phosphate (DHAP) to D-glyceraldehyde-3-phosphate (G3P). The sequence is that of Triosephosphate isomerase from Orientia tsutsugamushi (strain Boryong) (Rickettsia tsutsugamushi).